A 427-amino-acid polypeptide reads, in one-letter code: 3-phosphoshikimate 1-carboxyvinyltransferase (427 aa).

3-phosphoshikimate-binding residues include Lys20, Ser21, and Arg25. Residue Lys20 participates in phosphoenolpyruvate binding. Phosphoenolpyruvate-binding residues include Gly92 and Arg120. The 3-phosphoshikimate site is built by Ser166, Gln168, Asp312, and Lys339. Phosphoenolpyruvate is bound at residue Gln168. Asp312 serves as the catalytic Proton acceptor. Arg343 and Arg385 together coordinate phosphoenolpyruvate.

This sequence belongs to the EPSP synthase family. As to quaternary structure, monomer.

Its subcellular location is the cytoplasm. The enzyme catalyses 3-phosphoshikimate + phosphoenolpyruvate = 5-O-(1-carboxyvinyl)-3-phosphoshikimate + phosphate. Its pathway is metabolic intermediate biosynthesis; chorismate biosynthesis; chorismate from D-erythrose 4-phosphate and phosphoenolpyruvate: step 6/7. Functionally, catalyzes the transfer of the enolpyruvyl moiety of phosphoenolpyruvate (PEP) to the 5-hydroxyl of shikimate-3-phosphate (S3P) to produce enolpyruvyl shikimate-3-phosphate and inorganic phosphate. In Streptococcus thermophilus (strain ATCC BAA-491 / LMD-9), this protein is 3-phosphoshikimate 1-carboxyvinyltransferase.